Here is a 456-residue protein sequence, read N- to C-terminus: Putative F-box/LRR-repeat protein At3g18150 (456 aa).

Residues 30-78 (VDSISSLPDVILQHILSFIPTKLAITTSLLSKRWRHVWCDTPSLSFNDY) enclose the F-box domain. 6 LRR repeats span residues 177-202 (TCLLSDESMANILFGCPILESLTLDH), 203-213 (CGGLRVLDLSK), 228-253 (VPELTAMQIVAPHTHCLRLRNSKLPC), 278-303 (KADFLQVTLLKMLEKLHNVEKLTLGG), 333-358 (IFQYVIPGIERVLQNSPDLKKLTLLT), and 396-422 (CLDVESEHVVSFVELMLKNTKALDKMV).

The chain is Putative F-box/LRR-repeat protein At3g18150 from Arabidopsis thaliana (Mouse-ear cress).